An 892-amino-acid chain; its full sequence is Putative ubiquitin carboxyl-terminal hydrolase 11 (892 aa).

The DUSP domain occupies 17-132 (YTPEEERRIV…GGPPVPRKLI (116 aa)). Positions 69–89 (EPSEVTRPGPIDNHDIIDSES) are disordered. One can recognise a USP domain in the interval 301–880 (GGLQNLGNTC…AAYVLFYQRV (580 aa)). C310 functions as the Nucleophile in the catalytic mechanism. Residues 636 to 660 (NSGNENGHVPDESSRSILSRDTETE) form a disordered region. Basic and acidic residues predominate over residues 643 to 657 (HVPDESSRSILSRDT). H838 (proton acceptor) is an active-site residue.

It belongs to the peptidase C19 family.

The enzyme catalyses Thiol-dependent hydrolysis of ester, thioester, amide, peptide and isopeptide bonds formed by the C-terminal Gly of ubiquitin (a 76-residue protein attached to proteins as an intracellular targeting signal).. In terms of biological role, recognizes and hydrolyzes the peptide bond at the C-terminal Gly of ubiquitin. Involved in the processing of poly-ubiquitin precursors as well as that of ubiquitinated proteins. The chain is Putative ubiquitin carboxyl-terminal hydrolase 11 (UBP11) from Arabidopsis thaliana (Mouse-ear cress).